Consider the following 624-residue polypeptide: Probable potassium transport system protein Kup 1 (624 aa).

A run of 12 helical transmembrane segments spans residues Leu10 to Leu30, Leu48 to Phe68, Pro94 to Thr114, Leu133 to Ala153, Ile159 to Ile179, Phe210 to Gly230, Phe242 to Val262, Pro270 to Ala290, Ile331 to Phe351, Ile363 to Ile383, Thr388 to Ala408, and Phe413 to Ser433.

Belongs to the HAK/KUP transporter (TC 2.A.72) family.

It is found in the cell inner membrane. The enzyme catalyses K(+)(in) + H(+)(in) = K(+)(out) + H(+)(out). Functionally, transport of potassium into the cell. Likely operates as a K(+):H(+) symporter. In Legionella pneumophila (strain Paris), this protein is Probable potassium transport system protein Kup 1.